Consider the following 155-residue polypeptide: SsrA-binding protein (155 aa).

It belongs to the SmpB family.

It localises to the cytoplasm. In terms of biological role, required for rescue of stalled ribosomes mediated by trans-translation. Binds to transfer-messenger RNA (tmRNA), required for stable association of tmRNA with ribosomes. tmRNA and SmpB together mimic tRNA shape, replacing the anticodon stem-loop with SmpB. tmRNA is encoded by the ssrA gene; the 2 termini fold to resemble tRNA(Ala) and it encodes a 'tag peptide', a short internal open reading frame. During trans-translation Ala-aminoacylated tmRNA acts like a tRNA, entering the A-site of stalled ribosomes, displacing the stalled mRNA. The ribosome then switches to translate the ORF on the tmRNA; the nascent peptide is terminated with the 'tag peptide' encoded by the tmRNA and targeted for degradation. The ribosome is freed to recommence translation, which seems to be the essential function of trans-translation. In Lactococcus lactis subsp. cremoris (strain MG1363), this protein is SsrA-binding protein.